Here is a 653-residue protein sequence, read N- to C-terminus: Sodium-dependent phosphate transporter 2 (653 aa).

Residues 1-5 (MVLDE) lie on the Extracellular side of the membrane. Residues 6-26 (YMWMVIVGFIIAFVLAFSVGA) traverse the membrane as a helical segment. Residues 27 to 46 (NDVANSFGTAVGSGVVTLRQ) are Cytoplasmic-facing. Residues 47 to 67 (ACILASIFETIGSVLLGAKVG) form a helical membrane-spanning segment. Topologically, residues 68–86 (ETIRKGIIDVNLYNNTVDL) are extracellular. N81 is a glycosylation site (N-linked (GlcNAc...) asparagine). A helical transmembrane segment spans residues 87–107 (LMAGEVSAMVGSAVWQLIASF). Over 108 to 109 (LK) the chain is Cytoplasmic. The chain crosses the membrane as a helical span at residues 110–130 (LPVSGTHCIVGATIGFSLVAV). Residues 131-142 (GAHSVQWMQLVK) are Extracellular-facing. Residues 143–163 (IVASWFISPLLSGLMSGALFL) traverse the membrane as a helical segment. Topologically, residues 164–187 (MIKFFILNKEDPVPNGLKALPVFY) are cytoplasmic. Residues 188–208 (AATIGINVFSILFTGAPLLGL) traverse the membrane as a helical segment. Topologically, residues 209–217 (QTFPVWATA) are extracellular. Residues 218–238 (LLSVGIAIVFALVVWFFVCPW) traverse the membrane as a helical segment. The Cytoplasmic segment spans residues 239 to 483 (MKKKIASRLK…EDKEEKDKSQ (245 aa)). Positions 275–310 (LPGAKGNDESVLPLTSSSPDAAVSSESVSNGNTRVP) are disordered. The segment covering 290-303 (SSSPDAAVSSESVS) has biased composition (low complexity). A helical transmembrane segment spans residues 484 to 504 (VHLLFHFLQILTACFGSFAHG). Residues 505–532 (GNDVSNAIGPLVALWLIYQQGGVMQEAS) lie on the Extracellular side of the membrane. Residues 533–553 (TPVWLLLYGGVGICAGLWVWG) traverse the membrane as a helical segment. The Cytoplasmic portion of the chain corresponds to 554–572 (RRVIQTMGKDLTPITPSSG). A helical transmembrane segment spans residues 573 to 587 (FTIELASAFTVVVAS). Residues 588 to 594 (NIGLPIS) are Extracellular-facing. The helical transmembrane segment at 595–610 (TTHCKVGSVVAVGWIR) threads the bilayer. The Cytoplasmic portion of the chain corresponds to 611-622 (SRKAVDWRLFRN). A helical membrane pass occupies residues 623-643 (IFLAWFVTVPVAGLFSAGVMA). The Extracellular portion of the chain corresponds to 644-653 (ILQYGILPYV).

The protein belongs to the inorganic phosphate transporter (PiT) (TC 2.A.20) family. As to quaternary structure, homodimer.

The protein localises to the cell membrane. The protein resides in the apical cell membrane. It carries out the reaction 2 Na(+)(out) + phosphate(out) = 2 Na(+)(in) + phosphate(in). Sodium-phosphate symporter which preferentially transports the monovalent form of phosphate with a stoichiometry of two sodium ions per phosphate ion. This is Sodium-dependent phosphate transporter 2 (slc20a2) from Xenopus laevis (African clawed frog).